The chain runs to 334 residues: Ferredoxin--NADP reductase (334 aa).

Aspartate 33, glutamine 41, tyrosine 46, alanine 86, phenylalanine 120, aspartate 286, and threonine 327 together coordinate FAD.

This sequence belongs to the ferredoxin--NADP reductase type 2 family. As to quaternary structure, homodimer. The cofactor is FAD.

The enzyme catalyses 2 reduced [2Fe-2S]-[ferredoxin] + NADP(+) + H(+) = 2 oxidized [2Fe-2S]-[ferredoxin] + NADPH. In Rickettsia akari (strain Hartford), this protein is Ferredoxin--NADP reductase.